Here is a 281-residue protein sequence, read N- to C-terminus: L-ornithine N(alpha)-acyltransferase (281 aa).

It belongs to the acetyltransferase family. OlsB subfamily.

It carries out the reaction a (3R)-hydroxyacyl-[ACP] + L-ornithine = a lyso-ornithine lipid + holo-[ACP] + H(+). The protein operates within lipid metabolism. Catalyzes the first step in the biosynthesis of ornithine lipids, which are phosphorus-free membrane lipids. Catalyzes the 3-hydroxyacyl-acyl carrier protein-dependent acylation of ornithine to form lyso-ornithine lipid (LOL). The chain is L-ornithine N(alpha)-acyltransferase from Brucella abortus (strain 2308).